Consider the following 131-residue polypeptide: UPF0102 protein YraN (131 aa).

The segment covering 1-19 (MATVPTRSGSPRQLTTKQT) has biased composition (polar residues). The tract at residues 1-20 (MATVPTRSGSPRQLTTKQTG) is disordered.

The protein belongs to the UPF0102 family.

This is UPF0102 protein YraN from Shigella boydii serotype 18 (strain CDC 3083-94 / BS512).